Here is a 156-residue protein sequence, read N- to C-terminus: MTDSPASDAAQSSVVLTSEQIAGLLPHRYPFALVDRVIAHEPGVSATGIKNVTVNEPQFQGHFPGRPLMPGVLIVEAMAQVGGLIVTQMPDLPKGLFVFAGIDGVRFRRPVVPGDQLVIHCELLSLKRKRFGKVKAEAKVDGELVCSGELMFSLVD.

His62 is an active-site residue.

Belongs to the thioester dehydratase family. FabZ subfamily.

The protein resides in the cytoplasm. The enzyme catalyses a (3R)-hydroxyacyl-[ACP] = a (2E)-enoyl-[ACP] + H2O. Its function is as follows. Involved in unsaturated fatty acids biosynthesis. Catalyzes the dehydration of short chain beta-hydroxyacyl-ACPs and long chain saturated and unsaturated beta-hydroxyacyl-ACPs. In Parasynechococcus marenigrum (strain WH8102), this protein is 3-hydroxyacyl-[acyl-carrier-protein] dehydratase FabZ.